A 493-amino-acid polypeptide reads, in one-letter code: Cobyric acid synthase (493 aa).

The 195-residue stretch at 246–440 (PIDIAVIKMP…IHGVFDGVVF (195 aa)) folds into the GATase cobBQ-type domain. Cysteine 326 functions as the Nucleophile in the catalytic mechanism. Histidine 432 is an active-site residue.

This sequence belongs to the CobB/CobQ family. CobQ subfamily.

The protein operates within cofactor biosynthesis; adenosylcobalamin biosynthesis. Catalyzes amidations at positions B, D, E, and G on adenosylcobyrinic A,C-diamide. NH(2) groups are provided by glutamine, and one molecule of ATP is hydrogenolyzed for each amidation. The chain is Cobyric acid synthase from Clostridium botulinum (strain Okra / Type B1).